Here is a 644-residue protein sequence, read N- to C-terminus: MAHDEFGGLTGWDLEGFHSGGDTEVWKRLGSHVVTIDDDERGPITGTRFAVWAPNAQAVEVISDFNWWTGDRMRLIPGSGVWGTFVEGVDEGTLYKFRIQDQWGTWHEKVDPMARYSEQAPQNASIVTETHYEWNDDEWIARREASRAHAEPMSVYEVHLGGWRHGLSYRELADQLVSYVTWQGYTHVEFMPLAEHPFAPSWGYQVTGYFSPTSRYGSPDDLRYLIDKLHQAGIGVIMDWVPGHFPKDDWALGRFDGTALYEHADPRQGEHKDWGTYIFNYGRNEVKSFLVSSALYWISEFHADGLRVDAVASMLYLDYSREEGQWVPNKYGGRENLEAIDFLRYVNSHLYSRHPGILMIAEESTSFPGVTKPVDDGGLGFGFKWNMGWMNDSLRYLELNPFHRQYHHGEMTFAMVYQYSENFILPISHDEVVHGKGSMITKIPGDDWQQFASLRAFYSYMWSFPGKQLVFMGQEFGQRHEFDESVSLEWFVADLWGHGGLKRLFRDLNKIYKENPALWQLDSDPRGFEWINADDAGNNLFSWLRRSDDGSTIACFTNFSPNPQTDYRIDLPMEGVWTEILNTDSLEYDGTGEFGNLGQIVAAPLPAPDRLRAVATVCVPPMGSVWLRHNPSATAALPGDPGVQ.

The Nucleophile role is filled by D309. E362 functions as the Proton donor in the catalytic mechanism.

This sequence belongs to the glycosyl hydrolase 13 family. GlgB subfamily. In terms of assembly, monomer.

The catalysed reaction is Transfers a segment of a (1-&gt;4)-alpha-D-glucan chain to a primary hydroxy group in a similar glucan chain.. It functions in the pathway glycan biosynthesis; glycogen biosynthesis. Functionally, catalyzes the formation of the alpha-1,6-glucosidic linkages in glycogen by scission of a 1,4-alpha-linked oligosaccharide from growing alpha-1,4-glucan chains and the subsequent attachment of the oligosaccharide to the alpha-1,6 position. The protein is 1,4-alpha-glucan branching enzyme GlgB of Cutibacterium acnes (strain DSM 16379 / KPA171202) (Propionibacterium acnes).